The following is a 273-amino-acid chain: WIMGHMVNAIAQIDEFVNLGANSIETDVSFDDSANPEYTYHGVPCDCGRTCTKWEYFNEFLKGLRKATTPGDSKYHEKLVLVVFDLKTSSLYDNQASDAGKKLAKSLLQNYWNNGNNGGRAYIVLSIPNLAHYKLITGFKETLTSEGHPELMDKVGYDFSGNDEIGDVAKTYKKAGVTGHVWQSDGITNCLLRGLDRVRKAVANRDSSNGYINKVYYWTVDKRATTRDALDAGVDGIMTNYPDVIADVLNESAYKAKFRIASYDDNPWETFKN.

His-5 is a catalytic residue. Glu-25 and Asp-27 together coordinate Mg(2+). The active-site Nucleophile is His-41. 2 disulfide bridges follow: Cys-45–Cys-51 and Cys-47–Cys-190. Position 85 (Asp-85) interacts with Mg(2+). Asn-250 is a glycosylation site (N-linked (GlcNAc...) asparagine).

Belongs to the arthropod phospholipase D family. Class II subfamily. The cofactor is Mg(2+). In terms of tissue distribution, expressed by the venom gland.

The protein localises to the secreted. The enzyme catalyses an N-(acyl)-sphingosylphosphocholine = an N-(acyl)-sphingosyl-1,3-cyclic phosphate + choline. It carries out the reaction an N-(acyl)-sphingosylphosphoethanolamine = an N-(acyl)-sphingosyl-1,3-cyclic phosphate + ethanolamine. The catalysed reaction is a 1-acyl-sn-glycero-3-phosphocholine = a 1-acyl-sn-glycero-2,3-cyclic phosphate + choline. It catalyses the reaction a 1-acyl-sn-glycero-3-phosphoethanolamine = a 1-acyl-sn-glycero-2,3-cyclic phosphate + ethanolamine. In terms of biological role, dermonecrotic toxins cleave the phosphodiester linkage between the phosphate and headgroup of certain phospholipids (sphingolipid and lysolipid substrates), forming an alcohol (often choline) and a cyclic phosphate. This toxin acts on sphingomyelin (SM). It may also act on ceramide phosphoethanolamine (CPE), lysophosphatidylcholine (LPC) and lysophosphatidylethanolamine (LPE), but not on lysophosphatidylserine (LPS), and lysophosphatidylglycerol (LPG). It acts by transphosphatidylation, releasing exclusively cyclic phosphate products as second products. Induces dermonecrosis, hemolysis, increased vascular permeability, edema, inflammatory response, and platelet aggregation. The polypeptide is Dermonecrotic toxin LdSicTox-alphaIB1aii (Loxosceles deserta (Desert recluse spider)).